The primary structure comprises 215 residues: Pre-hexon-linking protein VIII (215 aa).

Residue Thr-62 is modified to Phosphothreonine; by host. The propeptide occupies 110-150 (AWINYKNGSVRYEAPLQLAEEQVGGPLNAFAIKHQLQLAGG).

The protein belongs to the adenoviridae hexon-linking protein family. Interacts with the peripentonal hexons as well as the hexons in the facets. Part of a complex composed of the core-capsid bridging protein, the endosome lysis protein VI and the hexon-linking protein VIII; these interactions bridge the virus core to the capsid. Cleaved by the viral protease during virion maturation. May cause the middle segment to be shed from the capsid.

The protein resides in the virion. Its subcellular location is the host nucleus. In terms of biological role, structural component of the virion that acts as a cement protein on the capsid interior and which glue the peripentonal hexons and group-of-nine hexons together. The chain is Pre-hexon-linking protein VIII from Murine adenovirus A serotype 1 (MAdV-1).